The following is a 227-amino-acid chain: PKHD-type hydroxylase GDI1238/Gdia_1949 (227 aa).

One can recognise a Fe2OG dioxygenase domain in the interval 78 to 178 (RVVPPLFNRY…RLASFFWTQS (101 aa)). Fe cation-binding residues include His96, Asp98, and His159. Arg169 is a 2-oxoglutarate binding site.

Fe(2+) serves as cofactor. L-ascorbate is required as a cofactor.

The protein is PKHD-type hydroxylase GDI1238/Gdia_1949 of Gluconacetobacter diazotrophicus (strain ATCC 49037 / DSM 5601 / CCUG 37298 / CIP 103539 / LMG 7603 / PAl5).